The primary structure comprises 183 residues: Protein jagunal homolog 1 (183 aa).

Residues 1–39 (MASRAGPRAAGTDGSDFQHRERVAMHYQMSVTLKYEIKK) are Cytoplasmic-facing. Phosphoserine is present on Ser-3. Residues 40–60 (LIYVHLVIWLLLVAKMSVGHL) traverse the membrane as a helical segment. The Lumenal portion of the chain corresponds to 61 to 71 (RLLSHDQVAMP). Residues 72-92 (YQWEYPYLLSIVPSVLGLLSF) traverse the membrane as a helical segment. The Cytoplasmic segment spans residues 93–96 (PRNN). Residues 97 to 117 (ISYLVLSMISMGLFSIAPLIY) form a helical membrane-spanning segment. Topologically, residues 118–137 (GSMEMFPAAQQLYRHGKAYR) are lumenal. A helical membrane pass occupies residues 138 to 158 (FLFGFSAVSVMYLVLVLAVQV). At 159–183 (HAWQLYYSKKLLDSWFTSTQEKKRK) the chain is on the cytoplasmic side.

The protein belongs to the jagunal family. In terms of assembly, interacts with COPA, COPB2 and COPG2.

Its subcellular location is the endoplasmic reticulum membrane. Endoplasmic reticulum transmembrane protein involved in vesicle-mediated transport, which is required for neutrophil function. Required for vesicle-mediated transport; it is however unclear whether it is involved in early secretory pathway or intracellular protein transport. Acts as a regulator of neutrophil function, probably via its role in vesicle-mediated transport: required for defense against fungal pathogens and for granulocyte colony-stimulating factor (GM-CSF) signaling pathway; possibly by regulating glycosylation and/or targeting of proteins contributing to the viability and migration of neutrophils. The sequence is that of Protein jagunal homolog 1 from Mus musculus (Mouse).